Reading from the N-terminus, the 146-residue chain is Small ribosomal subunit protein bS16 (146 aa).

Residues 119–146 (GSENKGGKSKKAEEKSAEKTAEKSEGEA) are disordered. Residues 128–146 (KKAEEKSAEKTAEKSEGEA) show a composition bias toward basic and acidic residues.

Belongs to the bacterial ribosomal protein bS16 family.

The polypeptide is Small ribosomal subunit protein bS16 (Thermobifida fusca (strain YX)).